The sequence spans 544 residues: 4-coumarate--CoA ligase 2 (544 aa).

6 residues coordinate ATP: S190, S191, G192, T193, T194, and K198. Y240 contacts (E)-4-coumaroyl-AMP. K261 provides a ligand contact to CoA. The interval 263–332 is SBD1; that stretch reads DIVPFLELIQ…AKFPNAKLGQ (70 aa). A310, Q332, G333, T337, and M345 together coordinate (E)-4-coumaroyl-AMP. Residues Q332, G333, and T337 each coordinate ATP. An SBD2 region spans residues 333-400; it reads GYGMTEAGPV…IRGDQIMKGY (68 aa). ATP is bound by residues D421 and R436. Residues K438 and K442 each contribute to the (E)-4-coumaroyl-AMP site. CoA-binding residues include K444 and G445. Residue K527 participates in ATP binding.

Belongs to the ATP-dependent AMP-binding enzyme family. The cofactor is Mg(2+).

The enzyme catalyses (E)-4-coumarate + ATP + CoA = (E)-4-coumaroyl-CoA + AMP + diphosphate. The catalysed reaction is (E)-4-coumarate + ATP + H(+) = (E)-4-coumaroyl-AMP + diphosphate. It carries out the reaction (E)-4-coumaroyl-AMP + CoA = (E)-4-coumaroyl-CoA + AMP + H(+). It functions in the pathway phytoalexin biosynthesis; 3,4',5-trihydroxystilbene biosynthesis; 3,4',5-trihydroxystilbene from trans-4-coumarate: step 1/2. In terms of biological role, carboxylate--CoA ligase that may use 4-coumarate as substrate. Follows a two-step reaction mechanism, wherein the carboxylate substrate first undergoes adenylation by ATP, followed by a thioesterification in the presence of CoA to yield the final CoA thioester. The sequence is that of 4-coumarate--CoA ligase 2 (4CL2) from Petroselinum crispum (Parsley).